The sequence spans 161 residues: Transcriptional repressor NrdR (161 aa).

The segment at Cys-3–Cys-34 is a zinc-finger region. In terms of domain architecture, ATP-cone spans Pro-49–Glu-139.

The protein belongs to the NrdR family. The cofactor is Zn(2+).

Negatively regulates transcription of bacterial ribonucleotide reductase nrd genes and operons by binding to NrdR-boxes. This Chromohalobacter salexigens (strain ATCC BAA-138 / DSM 3043 / CIP 106854 / NCIMB 13768 / 1H11) protein is Transcriptional repressor NrdR.